Here is a 149-residue protein sequence, read N- to C-terminus: D-aminoacyl-tRNA deacylase (149 aa).

The Gly-cisPro motif, important for rejection of L-amino acids motif lies at glycine 137–proline 138.

The protein belongs to the DTD family. As to quaternary structure, homodimer.

The protein resides in the cytoplasm. It catalyses the reaction glycyl-tRNA(Ala) + H2O = tRNA(Ala) + glycine + H(+). The enzyme catalyses a D-aminoacyl-tRNA + H2O = a tRNA + a D-alpha-amino acid + H(+). In terms of biological role, an aminoacyl-tRNA editing enzyme that deacylates mischarged D-aminoacyl-tRNAs. Also deacylates mischarged glycyl-tRNA(Ala), protecting cells against glycine mischarging by AlaRS. Acts via tRNA-based rather than protein-based catalysis; rejects L-amino acids rather than detecting D-amino acids in the active site. By recycling D-aminoacyl-tRNA to D-amino acids and free tRNA molecules, this enzyme counteracts the toxicity associated with the formation of D-aminoacyl-tRNA entities in vivo and helps enforce protein L-homochirality. This is D-aminoacyl-tRNA deacylase from Koribacter versatilis (strain Ellin345).